The following is a 741-amino-acid chain: Transketolase-1, chloroplastic (741 aa).

The transit peptide at 1–66 directs the protein to the chloroplast; that stretch reads MASTSSLALS…NRSLRPLVRA (66 aa). The segment at 22 to 51 is disordered; it reads GSDQRGSLPAFSGLKSTGSRASASSRRRIA. The residue at position 67 (A67) is an N-acetylalanine. H103 contributes to the substrate binding site. Residues H143 and 192 to 194 contribute to the thiamine diphosphate site; that span reads GPL. D233 is a binding site for Mg(2+). Thiamine diphosphate contacts are provided by G234 and N263. Residues N263 and I265 each contribute to the Mg(2+) site. Residue H340 participates in substrate binding. H340 lines the thiamine diphosphate pocket. S428 bears the Phosphoserine mark. Positions 434 and 461 each coordinate substrate. Positions 488 and 515 each coordinate thiamine diphosphate. E488 serves as the catalytic Proton donor. Substrate-binding residues include H539, D547, and R598.

The protein belongs to the transketolase family. As to quaternary structure, homodimer. It depends on Mg(2+) as a cofactor. Ca(2+) is required as a cofactor. Requires Mn(2+) as cofactor. Co(2+) serves as cofactor. The cofactor is thiamine diphosphate.

It localises to the plastid. Its subcellular location is the chloroplast stroma. It carries out the reaction D-sedoheptulose 7-phosphate + D-glyceraldehyde 3-phosphate = aldehydo-D-ribose 5-phosphate + D-xylulose 5-phosphate. Its pathway is carbohydrate biosynthesis; Calvin cycle. Functionally, catalyzes the reversible transfer of a two-carbon ketol group from fructose-6-phosphate or sedoheptulose-7-phosphate to glyceraldehyde-3-phosphate to yield xylulose-5-phosphate and erythrose-4-phosphate or ribose-5-phosphate, respectively. Could act as a stress sensor involved in adaptation process. This chain is Transketolase-1, chloroplastic (TKL-1), found in Arabidopsis thaliana (Mouse-ear cress).